The chain runs to 129 residues: N16.5 matrix protein (129 aa).

The N-terminal stretch at 1–23 (MTCTLRWTITALVLLGICHLARP) is a signal peptide. Repeat copies occupy residues 91-92 (NG), 93-94 (NG), 95-96 (NG), 97-98 (NG), and 99-100 (NG). The tract at residues 91 to 100 (NGNGNGNGNG) is 5 X 2 AA tandem repeats of N-G.

This sequence belongs to the N16 matrix protein family. In terms of assembly, heterooligomer; disulfide-linked. Pif97, Pif80, N16 and other proteins form a complex. Component of conchiolin, the organic matrix of nacre. Specifically expressed in mantle epithelium.

The protein localises to the secreted. The protein resides in the extracellular space. It is found in the extracellular matrix. Functionally, may be specifically involved in the formation of the nacreous layer. This Pinctada fucata (Akoya pearl oyster) protein is N16.5 matrix protein.